Reading from the N-terminus, the 253-residue chain is Large ribosomal subunit protein uL4 (253 aa).

A disordered region spans residues 62–107; the sequence is WGSGRGVSHVPRLKNSSRAARVPHAKGGRRAHPPKPEADRSEKVNT. A compositionally biased stretch (basic residues) spans 82-94; that stretch reads RVPHAKGGRRAHP. Residues 95–107 show a composition bias toward basic and acidic residues; sequence PKPEADRSEKVNT.

Belongs to the universal ribosomal protein uL4 family. In terms of assembly, part of the 50S ribosomal subunit.

In terms of biological role, one of the primary rRNA binding proteins, this protein initially binds near the 5'-end of the 23S rRNA. It is important during the early stages of 50S assembly. It makes multiple contacts with different domains of the 23S rRNA in the assembled 50S subunit and ribosome. Forms part of the polypeptide exit tunnel. This is Large ribosomal subunit protein uL4 from Methanosarcina mazei (strain ATCC BAA-159 / DSM 3647 / Goe1 / Go1 / JCM 11833 / OCM 88) (Methanosarcina frisia).